The following is a 217-amino-acid chain: Adenylate kinase (217 aa).

An ATP-binding site is contributed by 10–15 (GIGKGT). The NMP stretch occupies residues 30 to 59 (ATGDIFRKNFQENTPLGKESKKFINKGLLV). AMP-binding positions include Thr-31, Arg-36, 57–59 (LLV), 85–88 (GFPR), and Gln-92. An LID region spans residues 126–163 (GRRICSHCGKVYHLDNLPPKIEGICDKDQKKLIQREDD). Residue Arg-127 coordinates ATP. Zn(2+) is bound by residues Cys-130 and Cys-133. 136-137 (VY) contributes to the ATP binding site. Residues Cys-150 and Asp-153 each coordinate Zn(2+). AMP is bound by residues Arg-160 and Arg-171. Gln-199 lines the ATP pocket.

It belongs to the adenylate kinase family. As to quaternary structure, monomer.

Its subcellular location is the cytoplasm. It carries out the reaction AMP + ATP = 2 ADP. The protein operates within purine metabolism; AMP biosynthesis via salvage pathway; AMP from ADP: step 1/1. In terms of biological role, catalyzes the reversible transfer of the terminal phosphate group between ATP and AMP. Plays an important role in cellular energy homeostasis and in adenine nucleotide metabolism. This is Adenylate kinase from Phytoplasma australiense.